We begin with the raw amino-acid sequence, 461 residues long: Acetylcholine receptor subunit alpha (461 aa).

The N-terminal stretch at 1–24 is a signal peptide; that stretch reads MILCSYWHVGLVLLLFSCCGLVLG. Topologically, residues 25–234 are extracellular; the sequence is SEHETRLVAN…ITYHFIMQRI (210 aa). Intrachain disulfides connect Cys-152–Cys-166 and Cys-216–Cys-217. Residue Asn-165 is glycosylated (N-linked (GlcNAc...) asparagine). The next 3 helical transmembrane spans lie at 235-259, 267-285, and 301-320; these read PLYF…VFYL, MTLS…LVIV, and YMLF…VVVI. The Cytoplasmic segment spans residues 321–432; the sequence is NTHHRSPSTH…WKYVAMVIDH (112 aa). Residues 433–451 traverse the membrane as a helical segment; sequence ILLCVFMLICIIGTVSVFA.

The protein belongs to the ligand-gated ion channel (TC 1.A.9) family. Acetylcholine receptor (TC 1.A.9.1) subfamily. Alpha-1/CHRNA1 sub-subfamily. As to quaternary structure, pentamer of two alpha chains, and one each of the beta, delta, and gamma chains.

The protein resides in the postsynaptic cell membrane. Its subcellular location is the cell membrane. It carries out the reaction K(+)(in) = K(+)(out). The catalysed reaction is Na(+)(in) = Na(+)(out). Its function is as follows. Upon acetylcholine binding, the AChR responds by an extensive change in conformation that affects all subunits and leads to opening of an ion-conducting channel across the plasma membrane. The chain is Acetylcholine receptor subunit alpha (CHRNA1) from Tetronarce californica (Pacific electric ray).